A 153-amino-acid polypeptide reads, in one-letter code: Small ribosomal subunit protein uS13 (153 aa).

Residues 132–153 form a disordered region; sequence VRGQRTRSHHRKGRTVGVIKKK. Positions 135-153 are enriched in basic residues; sequence QRTRSHHRKGRTVGVIKKK.

It belongs to the universal ribosomal protein uS13 family. As to quaternary structure, part of the 30S ribosomal subunit. Forms a loose heterodimer with protein S19. Forms two bridges to the 50S subunit in the 70S ribosome.

Its function is as follows. Located at the top of the head of the 30S subunit, it contacts several helices of the 16S rRNA. In the 70S ribosome it contacts the 23S rRNA (bridge B1a) and protein L5 of the 50S subunit (bridge B1b), connecting the 2 subunits; these bridges are implicated in subunit movement. The sequence is that of Small ribosomal subunit protein uS13 from Nanoarchaeum equitans (strain Kin4-M).